We begin with the raw amino-acid sequence, 375 residues long: Succinyl-diaminopimelate desuccinylase (375 aa).

Zn(2+) is bound at residue H66. D68 is an active-site residue. D99 is a binding site for Zn(2+). The Proton acceptor role is filled by E133. The Zn(2+) site is built by E134, E162, and H348.

This sequence belongs to the peptidase M20A family. DapE subfamily. Homodimer. Zn(2+) serves as cofactor. Requires Co(2+) as cofactor.

The catalysed reaction is N-succinyl-(2S,6S)-2,6-diaminopimelate + H2O = (2S,6S)-2,6-diaminopimelate + succinate. The protein operates within amino-acid biosynthesis; L-lysine biosynthesis via DAP pathway; LL-2,6-diaminopimelate from (S)-tetrahydrodipicolinate (succinylase route): step 3/3. In terms of biological role, catalyzes the hydrolysis of N-succinyl-L,L-diaminopimelic acid (SDAP), forming succinate and LL-2,6-diaminopimelate (DAP), an intermediate involved in the bacterial biosynthesis of lysine and meso-diaminopimelic acid, an essential component of bacterial cell walls. The polypeptide is Succinyl-diaminopimelate desuccinylase (Erwinia tasmaniensis (strain DSM 17950 / CFBP 7177 / CIP 109463 / NCPPB 4357 / Et1/99)).